A 123-amino-acid polypeptide reads, in one-letter code: Highly acidic elicitin 20 (123 aa).

Residues 1–20 (MQFTALFAATAVALVGSVSA) form the signal peptide. 3 cysteine pairs are disulfide-bonded: Cys23-Cys91, Cys47-Cys76, and Cys71-Cys115.

This sequence belongs to the elicitin family.

Its subcellular location is the secreted. Induces local and distal defense responses (incompatible hypersensitive reaction) in plants from the solanaceae and cruciferae families. Elicits leaf necrosis and causes the accumulation of pathogenesis-related proteins. Might interact with the lipidic molecules of the plasma membrane. This is Highly acidic elicitin 20 (B20) from Phytophthora cryptogea.